Consider the following 555-residue polypeptide: CTP synthase (555 aa).

Residues Met-1–Ile-271 form an amidoligase domain region. Residue Ser-19 coordinates CTP. Residue Ser-19 coordinates UTP. Residues Ser-20 to Leu-25 and Asp-77 contribute to the ATP site. Mg(2+) is bound by residues Asp-77 and Glu-145. Residues Asp-152–Glu-154, Lys-192–Gln-197, and Lys-228 each bind CTP. Residues Lys-192–Gln-197 and Lys-228 each bind UTP. The Glutamine amidotransferase type-1 domain maps to Arg-297–Gln-538. Position 358 (Gly-358) interacts with L-glutamine. Cys-385 acts as the Nucleophile; for glutamine hydrolysis in catalysis. L-glutamine is bound by residues Leu-386–Gln-389, Glu-409, and Arg-466. Active-site residues include His-511 and Glu-513.

It belongs to the CTP synthase family. Homotetramer.

The enzyme catalyses UTP + L-glutamine + ATP + H2O = CTP + L-glutamate + ADP + phosphate + 2 H(+). It catalyses the reaction L-glutamine + H2O = L-glutamate + NH4(+). It carries out the reaction UTP + NH4(+) + ATP = CTP + ADP + phosphate + 2 H(+). Its pathway is pyrimidine metabolism; CTP biosynthesis via de novo pathway; CTP from UDP: step 2/2. Its activity is regulated as follows. Allosterically activated by GTP, when glutamine is the substrate; GTP has no effect on the reaction when ammonia is the substrate. The allosteric effector GTP functions by stabilizing the protein conformation that binds the tetrahedral intermediate(s) formed during glutamine hydrolysis. Inhibited by the product CTP, via allosteric rather than competitive inhibition. Catalyzes the ATP-dependent amination of UTP to CTP with either L-glutamine or ammonia as the source of nitrogen. Regulates intracellular CTP levels through interactions with the four ribonucleotide triphosphates. This is CTP synthase from Anaeromyxobacter sp. (strain Fw109-5).